The following is a 657-amino-acid chain: Probable alpha-galactosidase D (657 aa).

The signal sequence occupies residues 1–16 (MLPKIFYLSLLPAALG). Residues Asn-47 and Asn-91 are each glycosylated (N-linked (GlcNAc...) asparagine). Cys-124 and Cys-157 are oxidised to a cystine. Residue Asp-155 is the Nucleophile of the active site. N-linked (GlcNAc...) asparagine glycans are attached at residues Asn-182 and Asn-191. 200–204 (EWGID) lines the substrate pocket. Asp-222 functions as the Proton donor in the catalytic mechanism. Residues Asn-291, Asn-438, Asn-460, Asn-505, Asn-539, Asn-543, and Asn-582 are each glycosylated (N-linked (GlcNAc...) asparagine).

It belongs to the glycosyl hydrolase 27 family.

Its subcellular location is the secreted. The catalysed reaction is Hydrolysis of terminal, non-reducing alpha-D-galactose residues in alpha-D-galactosides, including galactose oligosaccharides, galactomannans and galactolipids.. In terms of biological role, hydrolyzes a variety of simple alpha-D-galactoside as well as more complex molecules such as oligosaccharides and polysaccharides. This chain is Probable alpha-galactosidase D (aglD), found in Aspergillus oryzae (strain ATCC 42149 / RIB 40) (Yellow koji mold).